Consider the following 397-residue polypeptide: Odorant receptor 98a (397 aa).

Residues 1–43 (MLFNYLRKPNPTNLLTSPDSFRYFEYGMFCMGWHTPATHKIIY) lie on the Cytoplasmic side of the membrane. Residues 44–64 (YITSCLIFAWCAVYLPIGIII) form a helical membrane-spanning segment. The Extracellular segment spans residues 65–77 (SFKTDINTFTPNE). Residues 78-98 (LLTVMQLFFNSVGMPFKVLFF) form a helical membrane-spanning segment. At 99 to 138 (NLYISGFYKAKKLLSEMDKRCTTLKERVEVHQGVVRCNKA) the chain is on the cytoplasmic side. A helical transmembrane segment spans residues 139–159 (YLIYQFIYTAYTISTFLSAAL). Over 160 to 192 (SGKLPWRIYNPFVDFRESRSSFWKAALNETALM) the chain is Extracellular. An N-linked (GlcNAc...) asparagine glycan is attached at asparagine 187. The helical transmembrane segment at 193–213 (LFAVTQTLMSDIYPLLYGLIL) threads the bilayer. At 214-266 (RVHLKLLRLRVESLCTDSGKSDAENEQDLIKCIKDHNLIIDYAAAIRPAVTRT) the chain is on the cytoplasmic side. Residues 267 to 287 (IFVQFLLIGICLGLSMINLLF) form a helical membrane-spanning segment. Residues 288 to 293 (FADIWT) are Extracellular-facing. A helical membrane pass occupies residues 294 to 314 (GLATVAYINGLMVQTFPFCFV). The Cytoplasmic portion of the chain corresponds to 315-354 (CDLLKKDCELLVSAIFHSNWINSSRSYKSSLRYFLKNAQK). Residues 355 to 375 (SIAFTAGSIFPISTGSNIKVA) form a helical membrane-spanning segment. Residues 376–397 (KLAFSVVTFVNQLNIADRLTKN) lie on the Extracellular side of the membrane.

It belongs to the insect chemoreceptor superfamily. Heteromeric odorant receptor channel (TC 1.A.69) family. Or2a subfamily. In terms of assembly, interacts with Orco. Complexes exist early in the endomembrane system in olfactory sensory neurons (OSNs), coupling these complexes to the conserved ciliary trafficking pathway. As to expression, expressed in olfactory sensory neurons in the antenna.

It localises to the cell membrane. In terms of biological role, odorant receptor which mediates acceptance or avoidance behavior, depending on its substrates. The odorant receptor repertoire encodes a large collection of odor stimuli that vary widely in identity, intensity, and duration. May form a complex with Orco to form odorant-sensing units, providing sensitive and prolonged odorant signaling and calcium permeability. This is Odorant receptor 98a (Or98a) from Drosophila melanogaster (Fruit fly).